The following is a 297-amino-acid chain: Small ribosomal subunit biogenesis GTPase RsgA (297 aa).

Residues 65 to 223 (TNEIGRPAVA…IADTPGFSAI (159 aa)) enclose the CP-type G domain. GTP is bound by residues 114–117 (SKAD) and 166–174 (GQSGAGKST). The Zn(2+) site is built by cysteine 247, cysteine 252, histidine 254, and cysteine 260.

This sequence belongs to the TRAFAC class YlqF/YawG GTPase family. RsgA subfamily. In terms of assembly, monomer. Associates with 30S ribosomal subunit, binds 16S rRNA. Zn(2+) is required as a cofactor.

It localises to the cytoplasm. Its function is as follows. One of several proteins that assist in the late maturation steps of the functional core of the 30S ribosomal subunit. Helps release RbfA from mature subunits. May play a role in the assembly of ribosomal proteins into the subunit. Circularly permuted GTPase that catalyzes slow GTP hydrolysis, GTPase activity is stimulated by the 30S ribosomal subunit. The sequence is that of Small ribosomal subunit biogenesis GTPase RsgA from Lactobacillus gasseri (strain ATCC 33323 / DSM 20243 / BCRC 14619 / CIP 102991 / JCM 1131 / KCTC 3163 / NCIMB 11718 / NCTC 13722 / AM63).